Here is an 812-residue protein sequence, read N- to C-terminus: Hyaluronate lyase HylB (812 aa).

Residues 1–32 (MFGTPSRRTFLTASALSAMALAASPTVTDAIA) constitute a signal peptide (tat-type signal). Catalysis depends on residues asparagine 222, histidine 272, and tyrosine 281.

Belongs to the polysaccharide lyase 8 family. Post-translationally, predicted to be exported by the Tat system. The position of the signal peptide cleavage has been experimentally proven.

It is found in the secreted. The catalysed reaction is [hyaluronan](n) = n 3-(4-deoxy-beta-D-gluc-4-enuronosyl)-N-acetyl-D-glucosamine + H2O. In terms of biological role, degrades hyaluronic acid (HA) exclusively into HA disaccharides (HA-2). Produced HA-2s confer anti-inflammatory properties leading to reduced immunopathology in the mouse model of acne. In Cutibacterium acnes (Propionibacterium acnes), this protein is Hyaluronate lyase HylB.